The following is a 396-amino-acid chain: Putative cystathionine beta-lyase (396 aa).

Residue lysine 210 is modified to N6-(pyridoxal phosphate)lysine.

This sequence belongs to the trans-sulfuration enzymes family. It depends on pyridoxal 5'-phosphate as a cofactor.

It carries out the reaction L,L-cystathionine + H2O = L-homocysteine + pyruvate + NH4(+). The enzyme catalyses an S-substituted L-cysteine + H2O = a thiol + pyruvate + NH4(+). The protein operates within amino-acid biosynthesis; L-methionine biosynthesis via de novo pathway; L-homocysteine from L-cystathionine: step 1/1. In terms of biological role, catalyzes the cleavage of cystathionine to homocysteine, pyruvate and ammonia during methionine biosynthesis. This Rhizobium johnstonii (strain DSM 114642 / LMG 32736 / 3841) (Rhizobium leguminosarum bv. viciae) protein is Putative cystathionine beta-lyase (metC).